The following is a 291-amino-acid chain: Stomatin-like protein 3 (291 aa).

At Ser-7 the chain carries Phosphoserine. Residues 29–49 (WILFSLSFLLVIITFPISIWM) traverse the membrane as a helical; Signal-anchor for type III membrane protein segment. Residues 50-291 (CLKIIKEYER…DNHKKLPNKA (242 aa)) are Cytoplasmic-facing. Ser-241 bears the Phosphoserine mark.

Belongs to the band 7/mec-2 family. In terms of assembly, homodimer. Interacts with PIEZO1 and PIEZO2.

The protein resides in the cell membrane. In terms of biological role, required for the function of many mechanoreceptors. Modulate mechanotransduction channels and acid-sensing ion channels (ASIC) proteins. Potentiates PIEZO1 and PIEZO2 function by increasing their sensitivity to mechanical stimulations. This is Stomatin-like protein 3 (STOML3) from Homo sapiens (Human).